Consider the following 839-residue polypeptide: MIQFSGRACLRQGWKCAAGVGLRCHGAHSSPPLHVPPFRRYTATYSRADETGHIDTAPNESVFYFDSVLPVKALFSRRFAPLDLAPSMTGRIGNLIIKLTGATPLNVIGRAFPLELQENIQQVIPRYSEGGAFVKLSHPPNMDKEGLSSLLNTHLEQNPLKLWFSPFTSVRASLVRGRPWLEDLQRSPSSRIKVEFLPTSPGASSVELTPELLYSLSRRYGKLADIIPQPSDSKIQPRYALLDFTRPSYAVIAKNCLHGYKVSASEGGGSAGTLLKLSYERKLKPHVIRGWIVSHPRIVIPIIAAVIAAITVIVFDPIRTFFIKIQIAPPIDVQDNRLWQWIQRQASKANDILSLRQRQRSDSRGLKAIWEDRKEDIQRLQTWLLEATNTFTVVHGPRGSGKKELVLDEVLKGYRHKLVIDCKPIQEARGDSATINAAAAEVGYRPVFSWMNSISSLIDVATQTLGANAGLSETLDSQLGHILQNTANALKKVALEKKRWDGKDSHMTDEEFLEAHPECRPVVVIDNFLYKANNNPMIYEKLSDWAAALTVSNIARVIFLTGDISYSKTLSRALPNQIFHEIQLGDCTPDVAKQFVLDHLHTDQSNSSSYTQAGPDTIEGGDIKDLEDCIEVLGGRLSDLEFFARMISRGQSPSDAVHDIIVQSAAEILKMYIADVDNTVRNWTPEQAWYLVSSLAEAQGGSILYSEALFSDLFKKDGESTIRALEQAELISVTTLNDRPSTIKPGRPVFAAAFRRLLEDDVLRCRLGLRTLGQQIAMENANINKYEGELQVLGSLEKEPKEIRPRVRWLLEKLAGSQAKIEKYEKESVGLRRILQSKM.

The transit peptide at 1-42 (MIQFSGRACLRQGWKCAAGVGLRCHGAHSSPPLHVPPFRRYT) directs the protein to the mitochondrion. The Mitochondrial matrix portion of the chain corresponds to 43–297 (ATYSRADETG…IRGWIVSHPR (255 aa)). The RRM domain occupies 190 to 282 (SRIKVEFLPT…TLLKLSYERK (93 aa)). Residues 298–318 (IVIPIIAAVIAAITVIVFDPI) traverse the membrane as a helical segment. The Mitochondrial intermembrane portion of the chain corresponds to 319 to 839 (RTFFIKIQIA…GLRRILQSKM (521 aa)). The stretch at 769–838 (LRTLGQQIAM…VGLRRILQSK (70 aa)) forms a coiled coil.

This sequence belongs to the YME2 family.

Its subcellular location is the mitochondrion inner membrane. Its function is as follows. Plays a role in maintaining the mitochondrial genome and in controlling the mtDNA escape. Involved in the regulation of mtDNA nucleotide structure and number. May have a dispensable role in early maturation of pre-rRNA. This is Mitochondrial escape protein 2 (YME2) from Coccidioides immitis (strain RS) (Valley fever fungus).